The following is a 384-amino-acid chain: Lipid-A-disaccharide synthase (384 aa).

It belongs to the LpxB family.

The enzyme catalyses a lipid X + a UDP-2-N,3-O-bis[(3R)-3-hydroxyacyl]-alpha-D-glucosamine = a lipid A disaccharide + UDP + H(+). It functions in the pathway bacterial outer membrane biogenesis; LPS lipid A biosynthesis. In terms of biological role, condensation of UDP-2,3-diacylglucosamine and 2,3-diacylglucosamine-1-phosphate to form lipid A disaccharide, a precursor of lipid A, a phosphorylated glycolipid that anchors the lipopolysaccharide to the outer membrane of the cell. The chain is Lipid-A-disaccharide synthase from Geobacter sulfurreducens (strain ATCC 51573 / DSM 12127 / PCA).